The chain runs to 452 residues: Tubulin beta-2 chain (452 aa).

8 residues coordinate GTP: Gln-11, Glu-74, Ser-143, Val-147, Thr-148, Gly-149, Asn-209, and Asn-231. A Mg(2+)-binding site is contributed by Glu-74. The disordered stretch occupies residues Gln-431–Asp-452. Over residues Thr-434–Asp-452 the composition is skewed to acidic residues.

Belongs to the tubulin family. In terms of assembly, dimer of alpha and beta chains. A typical microtubule is a hollow water-filled tube with an outer diameter of 25 nm and an inner diameter of 15 nM. Alpha-beta heterodimers associate head-to-tail to form protofilaments running lengthwise along the microtubule wall with the beta-tubulin subunit facing the microtubule plus end conferring a structural polarity. Microtubules usually have 13 protofilaments but different protofilament numbers can be found in some organisms and specialized cells. The cofactor is Mg(2+).

Its subcellular location is the cytoplasm. It localises to the cytoskeleton. Its function is as follows. Tubulin is the major constituent of microtubules, a cylinder consisting of laterally associated linear protofilaments composed of alpha- and beta-tubulin heterodimers. Microtubules grow by the addition of GTP-tubulin dimers to the microtubule end, where a stabilizing cap forms. Below the cap, tubulin dimers are in GDP-bound state, owing to GTPase activity of alpha-tubulin. This chain is Tubulin beta-2 chain, found in Homarus americanus (American lobster).